We begin with the raw amino-acid sequence, 231 residues long: Lactate utilization protein C (231 aa).

The protein belongs to the LutC/YkgG family.

In terms of biological role, is involved in L-lactate degradation and allows cells to grow with lactate as the sole carbon source. The polypeptide is Lactate utilization protein C (Macrococcus caseolyticus (strain JCSC5402) (Macrococcoides caseolyticum)).